We begin with the raw amino-acid sequence, 348 residues long: Dihydroorotase (348 aa).

Zn(2+)-binding residues include His-14 and His-16. Substrate is bound by residues 16–18 (HLR) and Asn-42. Lys-100, His-137, and His-175 together coordinate Zn(2+). Lys-100 bears the N6-carboxylysine mark. His-137 contacts substrate. Leu-220 provides a ligand contact to substrate. Asp-248 is a Zn(2+) binding site. Asp-248 is an active-site residue. 2 residues coordinate substrate: His-252 and Ala-264.

It belongs to the metallo-dependent hydrolases superfamily. DHOase family. Class II DHOase subfamily. In terms of assembly, homodimer. It depends on Zn(2+) as a cofactor.

It catalyses the reaction (S)-dihydroorotate + H2O = N-carbamoyl-L-aspartate + H(+). It functions in the pathway pyrimidine metabolism; UMP biosynthesis via de novo pathway; (S)-dihydroorotate from bicarbonate: step 3/3. Catalyzes the reversible cyclization of carbamoyl aspartate to dihydroorotate. The protein is Dihydroorotase of Pseudomonas aeruginosa (strain ATCC 15692 / DSM 22644 / CIP 104116 / JCM 14847 / LMG 12228 / 1C / PRS 101 / PAO1).